The primary structure comprises 410 residues: Calsequestrin-2 (410 aa).

A signal peptide spans 1-19 (MKRTHLFIAGLYLLASCRA). Residues 221–242 (MDEPIAIPDKPYTEEELVEFVK) are calcium regulated hydrophobic site. Y282 is modified (phosphotyrosine). 2 N-linked (GlcNAc...) asparagine glycosylation sites follow: N335 and N395. Residues 364 to 410 (DVLSGKINTEDDDNEEGDDGDDDEDDDDDDGNNSDEESNDDSDDDDE) form a disordered region. Residues 373–410 (EDDDNEEGDDGDDDEDDDDDDGNNSDEESNDDSDDDDE) show a composition bias toward acidic residues. Phosphoserine; by CK2 is present on residues S397, S401, and S405.

It belongs to the calsequestrin family. As to quaternary structure, interacts with ASPH. Monomer, homodimer and homooligomer. Mostly monomeric in the absence of calcium. Forms higher oligomers in a calcium-dependent manner. Dimers associate to form tetramers, that then form linear homomer chains. Interacts with TRDN. Phosphorylation in the C-terminus, probably by CK2, moderately increases calcium buffering capacity. In terms of processing, N-glycosylated. Detected in heart muscle (at protein level).

It is found in the sarcoplasmic reticulum lumen. Its function is as follows. Calsequestrin is a high-capacity, moderate affinity, calcium-binding protein and thus acts as an internal calcium store in muscle. Calcium ions are bound by clusters of acidic residues at the protein surface, especially at the interface between subunits. Can bind around 60 Ca(2+) ions. Regulates the release of lumenal Ca(2+) via the calcium release channel RYR2; this plays an important role in triggering muscle contraction. Plays a role in excitation-contraction coupling in the heart and in regulating the rate of heart beats. This chain is Calsequestrin-2 (CASQ2), found in Canis lupus familiaris (Dog).